The chain runs to 75 residues: uncharacterized protein (75 aa).

In terms of domain architecture, SpoVT-AbrB spans 3–45 (TTVFLSNRSQAVRLPKAVALPENVKRVEVIAVGRTRIITPAGE).

Belongs to the VapB family.

This is an uncharacterized protein from Escherichia coli (strain K12).